Consider the following 228-residue polypeptide: MCLIFTKDRFEKSPFLKFIILLLPFSYSAVQYALLRTNWKSDNKPEGILQSILYHTLSLLLLAFAAISILSITAFTLDKWESSESIFFSIVLPSFFIPPTYLLSTSCRLVPGQIGFTDTGINVLIDIPILLCPLVSLVLIIALEETECCYYSAIISSVFILIRLLREKYSPSEKSTLPTAPWRVAILVLILTLAALIYAFMMWGSMDILNDHFGLLNKLKRVFPFTNA.

This sequence belongs to the UPF0328 family.

In Encephalitozoon cuniculi (strain GB-M1) (Microsporidian parasite), this protein is UPF0328 protein ECU07_0040.